A 401-amino-acid polypeptide reads, in one-letter code: 8-amino-7-oxononanoate synthase (401 aa).

Arg24 provides a ligand contact to substrate. A pyridoxal 5'-phosphate-binding site is contributed by 111–112 (GF). His137 is a substrate binding site. Positions 183, 211, and 240 each coordinate pyridoxal 5'-phosphate. N6-(pyridoxal phosphate)lysine is present on Lys243. Thr357 provides a ligand contact to substrate.

Belongs to the class-II pyridoxal-phosphate-dependent aminotransferase family. BioF subfamily. As to quaternary structure, homodimer. Requires pyridoxal 5'-phosphate as cofactor.

The catalysed reaction is 6-carboxyhexanoyl-[ACP] + L-alanine + H(+) = (8S)-8-amino-7-oxononanoate + holo-[ACP] + CO2. The protein operates within cofactor biosynthesis; biotin biosynthesis. Its function is as follows. Catalyzes the decarboxylative condensation of pimeloyl-[acyl-carrier protein] and L-alanine to produce 8-amino-7-oxononanoate (AON), [acyl-carrier protein], and carbon dioxide. This chain is 8-amino-7-oxononanoate synthase, found in Xylella fastidiosa (strain 9a5c).